We begin with the raw amino-acid sequence, 89 residues long: Arminin 7519 (89 aa).

Residues 1-18 (MRSTFAVLFLALIALTYS) form the signal peptide. Residues 19 to 59 (KNYQDVKEEIKNEVENEILRDLGEDDDELDDNAQEAVNDAR) constitute a propeptide that is removed on maturation. At A86 the chain carries Alanine amide.

This sequence belongs to the arminin family. Expressed in entodermal epithelium along the body column.

The protein resides in the secreted. It is found in the target cell membrane. Antimicrobial peptide with a broad-spectrum antimicrobial activity. Keeps its antibacterial activity under a wide range of salt concentrations that mimic physiological conditions of human blood, which is surprising, since Hydra is an obligate freshwater animal with nearly no salt tolerance. Does not affect red blood cells. This Hydra vulgaris (Hydra) protein is Arminin 7519.